The sequence spans 307 residues: N-acetylneuraminate lyase (307 aa).

T51 and T52 together coordinate aceneuramate. Y143 functions as the Proton donor in the catalytic mechanism. K173 acts as the Schiff-base intermediate with substrate in catalysis. 5 residues coordinate aceneuramate: S175, G199, D201, E202, and S218.

The protein belongs to the DapA family. NanA subfamily. Homotetramer.

It localises to the cytoplasm. It carries out the reaction aceneuramate = aldehydo-N-acetyl-D-mannosamine + pyruvate. Its pathway is amino-sugar metabolism; N-acetylneuraminate degradation. Catalyzes the cleavage of N-acetylneuraminic acid (sialic acid) to form pyruvate and N-acetylmannosamine via a Schiff base intermediate. It prevents sialic acids from being recycled and returning to the cell surface. Involved in the N-glycolylneuraminic acid (Neu5Gc) degradation pathway. The sequence is that of N-acetylneuraminate lyase from Danio rerio (Zebrafish).